We begin with the raw amino-acid sequence, 1077 residues long: Teashirt homolog 1-B (1077 aa).

Disordered stretches follow at residues 1 to 110 (MPRR…NASY) and 142 to 179 (NEKA…SCTN). The span at 26-36 (TEEDNLEDDGL) shows a compositional bias: acidic residues. The span at 56-69 (TQSYQNSPISSATN) shows a compositional bias: polar residues. The span at 160 to 179 (SGPTSDPGTPTTITSSSCTN) shows a compositional bias: low complexity. The segment at 248 to 272 (FRCKDCSAAYDTLVELTVHMNETGH) adopts a C2H2-type 1 zinc-finger fold. The segment covering 274–286 (RDDNRDREAERTK) has biased composition (basic and acidic residues). The segment at 274 to 300 (RDDNRDREAERTKRWSKPRKRSLMEME) is disordered. The C2H2-type 2 zinc-finger motif lies at 309-333 (LKCMYCGHSFESLQDLSVHMIKTKH). The segment at 362 to 394 (ALPDSPEQAGISPGASVSESAKDPKAANPYVTP) is disordered. A C2H2-type 3 zinc finger spans residues 418–442 (LKCMECGSSHDTLQQLTAHMMVTGH). Disordered stretches follow at residues 473–530 (PPTT…KIEP) and 849–873 (GRLT…SSFE). The span at 497-529 (HSEEKKDPEKEKVNIGEVEKKIKEENEDPEKIE) shows a compositional bias: basic and acidic residues. A compositionally biased stretch (polar residues) spans 853–862 (PKSSTPSTVS). The homeobox DNA-binding region spans 885 to 955 (RKGRQSNWNP…NVKYQLRRTG (71 aa)). 2 consecutive C2H2-type zinc fingers follow at residues 970–992 (FFCN…LETH) and 1037–1060 (FQCK…SKTH).

Belongs to the teashirt C2H2-type zinc-finger protein family.

The protein localises to the nucleus. Probable transcriptional regulator involved in developmental processes. May act as a transcriptional repressor (Potential). Involved in two major neuronal regionalization processes: primary anteroposterior (AP) axis patterning of the CNS and segmentation of the cranial neuronal crest (CNS) development. This is Teashirt homolog 1-B (tshz1-b) from Xenopus laevis (African clawed frog).